Consider the following 251-residue polypeptide: Small ribosomal subunit protein uS2 (251 aa).

Residues 232–251 (EAIAEMDEQVEEDAEEASND) form a disordered region.

Belongs to the universal ribosomal protein uS2 family.

The chain is Small ribosomal subunit protein uS2 from Chlorobaculum parvum (strain DSM 263 / NCIMB 8327) (Chlorobium vibrioforme subsp. thiosulfatophilum).